The chain runs to 296 residues: tRNA (guanine(9)-N1)-methyltransferase (296 aa).

Residues 1–33 are disordered; the sequence is MTPETNNDETLSRPKPRAALPPVPEGMSKSQWK. The SAM-dependent MTase TRM10-type domain maps to 85–274; that stretch reads TPRVNVNQKD…SVLPARKLAE (190 aa). S-adenosyl-L-methionine-binding positions include 181–182, Gly201, 205–209, Cys213, Leu227, and 239–241; these read LT, DKNRH, and KVL. Asp205 acts as the Proton acceptor in catalysis. Positions 277–296 are disordered; it reads DHAQESNSSSPAEEQDAQDI.

This sequence belongs to the class IV-like SAM-binding methyltransferase superfamily. TRM10 family. In terms of assembly, monomer.

The protein localises to the cytoplasm. It is found in the nucleus. It carries out the reaction guanosine(9) in tRNA + S-adenosyl-L-methionine = N(1)-methylguanosine(9) in tRNA + S-adenosyl-L-homocysteine + H(+). Its function is as follows. S-adenosyl-L-methionine-dependent guanine N(1)-methyltransferase that catalyzes the formation of N(1)-methylguanine at position 9 (m1G9) in cytoplasmic tRNA. The sequence is that of tRNA (guanine(9)-N1)-methyltransferase from Eremothecium gossypii (strain ATCC 10895 / CBS 109.51 / FGSC 9923 / NRRL Y-1056) (Yeast).